Reading from the N-terminus, the 171-residue chain is Glycine cleavage system H protein 4 (171 aa).

The region spanning 30 to 112 is the Lipoyl-binding domain; the sequence is FAEVGITDYA…YEAGWIAVIE (83 aa). Lys-71 carries the post-translational modification N6-lipoyllysine. A disordered region spans residues 139–171; it reads EKEEEVEVKEEELIETESIEELSEEELGYEENK.

This sequence belongs to the GcvH family. In terms of assembly, the glycine cleavage system is composed of four proteins: P, T, L and H. The cofactor is (R)-lipoate.

The glycine cleavage system catalyzes the degradation of glycine. The H protein shuttles the methylamine group of glycine from the P protein to the T protein. This chain is Glycine cleavage system H protein 4, found in Aquifex aeolicus (strain VF5).